A 424-amino-acid polypeptide reads, in one-letter code: MASGDGGDDAGVKRVADRYLKREVLGEGTYGVVFKADDTKTGNTVAIKKIRLGKYKEGVNFTALREIKLLKELKDSNIIELIDAFPYKGNLHLVFEFMETDLEAVIRDRNIVLSPADTKSYIQMMLKGLAFCHKKWVLHRDMKPNNLLIGADGQLKLADFGLARIFGSPERNFTHQVFARWYRAPELLFGTKQYGSAVDIWAAGCIFAELLLRRPFLQGSSDIDQLGKIFAAFGTPKSSQWPDMVYLPDYVEYQFVSAPPLRSLFPMASDDALDLLSRMFTYDPKARITAQQALEHRYFLSVPAPTKPSQLPRPPPKGDSGNNKIPDLNLQDGPVVLSPPRKLRRVTAHEGMEVHMHRADRTEEHPSGARHMDDMSSQSSRIPMSVDVGAIFGTRPAPRPTLNSADKSRLKRKLDMDPEFGYTE.

The Protein kinase domain maps to 19–299; sequence YLKREVLGEG…AQQALEHRYF (281 aa). ATP contacts are provided by residues 25–33 and lysine 48; that span reads LGEGTYGVV. The residue at position 29 (threonine 29) is a Phosphothreonine. Position 30 is a phosphotyrosine (tyrosine 30). Aspartate 141 (proton acceptor) is an active-site residue. Serine 168 bears the Phosphoserine mark. A Phosphothreonine modification is found at threonine 174. Disordered regions lie at residues 303-337 and 359-424; these read PAPT…PVVL and ADRT…GYTE. The span at 359–374 shows a compositional bias: basic and acidic residues; it reads ADRTEEHPSGARHMDD.

This sequence belongs to the protein kinase superfamily. CMGC Ser/Thr protein kinase family. CDC2/CDKX subfamily.

Its subcellular location is the nucleus. The catalysed reaction is L-seryl-[protein] + ATP = O-phospho-L-seryl-[protein] + ADP + H(+). The enzyme catalyses L-threonyl-[protein] + ATP = O-phospho-L-threonyl-[protein] + ADP + H(+). It carries out the reaction [DNA-directed RNA polymerase] + ATP = phospho-[DNA-directed RNA polymerase] + ADP + H(+). The sequence is that of Cyclin-dependent kinase D-1 (CDKD-1) from Oryza sativa subsp. indica (Rice).